The primary structure comprises 189 residues: Xanthine phosphoribosyltransferase (189 aa).

2 residues coordinate xanthine: leucine 20 and asparagine 27. 128-132 contributes to the 5-phospho-alpha-D-ribose 1-diphosphate binding site; it reads ANGEA. Residue lysine 156 participates in xanthine binding.

The protein belongs to the purine/pyrimidine phosphoribosyltransferase family. Xpt subfamily. Homodimer.

It localises to the cytoplasm. It carries out the reaction XMP + diphosphate = xanthine + 5-phospho-alpha-D-ribose 1-diphosphate. It participates in purine metabolism; XMP biosynthesis via salvage pathway; XMP from xanthine: step 1/1. Converts the preformed base xanthine, a product of nucleic acid breakdown, to xanthosine 5'-monophosphate (XMP), so it can be reused for RNA or DNA synthesis. This Lactobacillus delbrueckii subsp. bulgaricus (strain ATCC 11842 / DSM 20081 / BCRC 10696 / JCM 1002 / NBRC 13953 / NCIMB 11778 / NCTC 12712 / WDCM 00102 / Lb 14) protein is Xanthine phosphoribosyltransferase.